Reading from the N-terminus, the 43-residue chain is Lanthionine-containing peptide SapB (43 aa).

Residues 1–21 form the signal peptide; sequence MALLDLQAMDTPAEDSFGELA. Cross-links (lanthionine (Ser-Cys)) lie at residues 24-31 and 34-41; these read SQVSLLVC and SSLSVVLC. 2,3-didehydroalanine (Ser) occurs at positions 27 and 37.

The protein belongs to the lanthionine-containing morphogen protein family. Maturation involves the enzymatic conversion of Ser into dehydrated AA and the formation of thioether bonds with cysteine. This is followed by membrane translocation and cleavage of the modified precursor.

Its function is as follows. Lanthionine-containing peptide devoid of antibiotic properties, involved in the formation of aerial mycelium. Suggested to self-assemble at air-water interfaces, thus providing a film of surfactant through which nascent aerial hyphae can emerge. The aerial hyphae differentiate further into spores. This Streptomyces griseus subsp. griseus (strain JCM 4626 / CBS 651.72 / NBRC 13350 / KCC S-0626 / ISP 5235) protein is Lanthionine-containing peptide SapB (ramS).